We begin with the raw amino-acid sequence, 501 residues long: ADP,ATP carrier protein 3 (501 aa).

12 helical membrane-spanning segments follow: residues 23 to 43, 59 to 79, 90 to 110, 146 to 166, 183 to 203, 227 to 247, 293 to 313, 326 to 346, 361 to 381, 383 to 403, 446 to 466, and 470 to 490; these read LKLFIPMALMMLCILFNFGAL, IISFLKLWLVLPSCVIFTVLY, YIFYSIVGTFLLFFLLFAYII, YALMYIFSELWSAVVINLMFW, PVLGMIGNIGLIIAGSVLVFF, IILQPIISIIVTAGIIAMFLF, IALLIICYGLLINIVEGPWKA, VNFMGMFNIWMGISCVTFMII, LLTPIMLSITGFIFFIFIIFI, EIGTCFGDFNLLYVAIIVGAI, FGKSLGAFIQSLIFIIIPTAT, and IIIYLLVIFIVMMNLWIWNII.

The protein belongs to the ADP/ATP translocase tlc family.

It localises to the cell membrane. Its function is as follows. Provides the rickettsial cell with host ATP in exchange for rickettsial ADP. This is an obligate exchange system. This energy acquiring activity is an important component of rickettsial parasitism. This chain is ADP,ATP carrier protein 3 (tlcC), found in Rickettsia typhi (strain ATCC VR-144 / Wilmington).